Reading from the N-terminus, the 306-residue chain is GTP cyclohydrolase FolE2 (306 aa).

This sequence belongs to the GTP cyclohydrolase IV family.

The catalysed reaction is GTP + H2O = 7,8-dihydroneopterin 3'-triphosphate + formate + H(+). The protein operates within cofactor biosynthesis; 7,8-dihydroneopterin triphosphate biosynthesis; 7,8-dihydroneopterin triphosphate from GTP: step 1/1. Functionally, converts GTP to 7,8-dihydroneopterin triphosphate. This is GTP cyclohydrolase FolE2 from Xanthomonas oryzae pv. oryzae (strain MAFF 311018).